Consider the following 117-residue polypeptide: Ribonuclease P protein component 4 (117 aa).

Positions 64, 67, 93, and 96 each coordinate Zn(2+).

The protein belongs to the eukaryotic/archaeal RNase P protein component 4 family. As to quaternary structure, consists of a catalytic RNA component and at least 4-5 protein subunits. Zn(2+) is required as a cofactor.

It localises to the cytoplasm. The catalysed reaction is Endonucleolytic cleavage of RNA, removing 5'-extranucleotides from tRNA precursor.. In terms of biological role, part of ribonuclease P, a protein complex that generates mature tRNA molecules by cleaving their 5'-ends. The protein is Ribonuclease P protein component 4 of Pyrococcus abyssi (strain GE5 / Orsay).